The chain runs to 127 residues: Glycine cleavage system H protein 1 (127 aa).

The 82-residue stretch at 20–101 (SVTVGITAYA…MGEGWFFRFI (82 aa)) folds into the Lipoyl-binding domain. At Lys60 the chain carries N6-lipoyllysine.

Belongs to the GcvH family. As to quaternary structure, the glycine cleavage system is composed of four proteins: P, T, L and H. (R)-lipoate is required as a cofactor.

The glycine cleavage system catalyzes the degradation of glycine. The H protein shuttles the methylamine group of glycine from the P protein to the T protein. The polypeptide is Glycine cleavage system H protein 1 (Pseudomonas putida (strain ATCC 47054 / DSM 6125 / CFBP 8728 / NCIMB 11950 / KT2440)).